Consider the following 547-residue polypeptide: Putative HMP/thiamine import ATP-binding protein YkoD (547 aa).

2 ABC transporter domains span residues 8-250 and 295-523; these read LTVE…KLGI and LEVS…KAKL. Residues 42-49 and 327-334 contribute to the ATP site; these read GPSGCGKS and GPNGTGKS.

This sequence belongs to the ABC transporter superfamily. As to quaternary structure, the complex is composed of two ATP-binding proteins (YkoD), two transmembrane proteins (YkoC and YkoE) and a solute-binding protein (YkoF).

The protein localises to the cell membrane. Its function is as follows. Part of the ABC transporter complex YkoCDEF that could transport hydroxymethylpyrimidine (HMP) and/or thiamine. Could also transport other HMP-containing products. Responsible for energy coupling to the transport system. This is Putative HMP/thiamine import ATP-binding protein YkoD (ykoD) from Bacillus subtilis (strain 168).